The sequence spans 147 residues: UPF0178 protein CV_1768 (147 aa).

Belongs to the UPF0178 family.

The protein is UPF0178 protein CV_1768 of Chromobacterium violaceum (strain ATCC 12472 / DSM 30191 / JCM 1249 / CCUG 213 / NBRC 12614 / NCIMB 9131 / NCTC 9757 / MK).